A 189-amino-acid polypeptide reads, in one-letter code: Elongation factor P (189 aa).

This sequence belongs to the elongation factor P family.

The protein localises to the cytoplasm. Its pathway is protein biosynthesis; polypeptide chain elongation. Functionally, involved in peptide bond synthesis. Stimulates efficient translation and peptide-bond synthesis on native or reconstituted 70S ribosomes in vitro. Probably functions indirectly by altering the affinity of the ribosome for aminoacyl-tRNA, thus increasing their reactivity as acceptors for peptidyl transferase. The polypeptide is Elongation factor P (Rhizobium johnstonii (strain DSM 114642 / LMG 32736 / 3841) (Rhizobium leguminosarum bv. viciae)).